A 116-amino-acid polypeptide reads, in one-letter code: MNAKKQSRIRRATRSRSKIRELRETRLCVNRTPRHIYAQIISPESDKVLASASTLDKDLRSGATGNIDAATAVGKLIAERAKAAGVTKVAFDRSGFKFHGRVKALADAARESGLEF.

It belongs to the universal ribosomal protein uL18 family. As to quaternary structure, part of the 50S ribosomal subunit; part of the 5S rRNA/L5/L18/L25 subcomplex. Contacts the 5S and 23S rRNAs.

In terms of biological role, this is one of the proteins that bind and probably mediate the attachment of the 5S RNA into the large ribosomal subunit, where it forms part of the central protuberance. In Teredinibacter turnerae (strain ATCC 39867 / T7901), this protein is Large ribosomal subunit protein uL18.